Consider the following 585-residue polypeptide: Glutamate decarboxylase 2 (585 aa).

The disordered stretch occupies residues 1–24 (MASPGSGFWSFGSEDGSGDPENSG). Serine 3, serine 6, serine 10, and serine 13 each carry phosphoserine. Residues cysteine 30 and cysteine 45 are each lipidated (S-palmitoyl cysteine). Residue 181-183 (QLS) coordinates substrate. Lysine 396 is modified (N6-(pyridoxal phosphate)lysine). Residue arginine 558 participates in substrate binding.

The protein belongs to the group II decarboxylase family. In terms of assembly, homodimer. Requires pyridoxal 5'-phosphate as cofactor. Post-translationally, phosphorylated; which does not affect kinetic parameters or subcellular location. Palmitoylated; which is required for presynaptic clustering.

It localises to the cytoplasm. The protein resides in the cytosol. Its subcellular location is the cytoplasmic vesicle. The protein localises to the presynaptic cell membrane. It is found in the golgi apparatus membrane. The catalysed reaction is L-glutamate + H(+) = 4-aminobutanoate + CO2. Catalyzes the production of GABA. The sequence is that of Glutamate decarboxylase 2 (GAD2) from Sus scrofa (Pig).